The following is a 21-amino-acid chain: 5-methyltetrahydropteroyltriglutamate--homocysteine methyltransferase (21 aa).

Belongs to the vitamin-B12 independent methionine synthase family. Zn(2+) serves as cofactor.

It is found in the cytoplasm. It carries out the reaction 5-methyltetrahydropteroyltri-L-glutamate + L-homocysteine = tetrahydropteroyltri-L-glutamate + L-methionine. It participates in amino-acid biosynthesis; L-methionine biosynthesis via de novo pathway; L-methionine from L-homocysteine (MetE route): step 1/1. Its function is as follows. Catalyzes the transfer of a methyl group from 5-methyltetrahydrofolate to homocysteine resulting in methionine formation. In Populus euphratica (Euphrates poplar), this protein is 5-methyltetrahydropteroyltriglutamate--homocysteine methyltransferase.